Here is a 169-residue protein sequence, read N- to C-terminus: CKLF-like MARVEL transmembrane domain-containing protein 1 (169 aa).

The 119-residue stretch at 17–135 (NLKQPETAAA…DAFVVTTKMR (119 aa)) folds into the MARVEL domain. 4 consecutive transmembrane segments (helical) span residues 22 to 42 (ETAAALSLILGALACFIITQA), 46 to 66 (FITITSLEICIVVFFILIYVL), 79 to 99 (LLDLTNSIITAVFLSVVAILA), and 110 to 130 (YVGGSLCLTAVIVCCIDAFVV).

This sequence belongs to the chemokine-like factor family. As to expression, highly expressed in testis.

The protein resides in the membrane. The protein is CKLF-like MARVEL transmembrane domain-containing protein 1 (CMTM1) of Homo sapiens (Human).